Reading from the N-terminus, the 289-residue chain is Growth hormone-regulated TBC protein 1 (289 aa).

The Rab-GAP TBC domain occupies 41–211 (LVILTKRAIK…RIWDCLFNEG (171 aa)).

Its function is as follows. May act as a GTPase-activating protein for Rab family protein(s). The protein is Growth hormone-regulated TBC protein 1 (Grtp1) of Rattus norvegicus (Rat).